A 147-amino-acid polypeptide reads, in one-letter code: TRAF-interacting protein with FHA domain-containing protein B (147 aa).

The FHA domain maps to 36–108 (LLVGRGQDTH…LHSVNRISFS (73 aa)).

Interacts with TIFA.

Functionally, inhibits TIFA-mediated TRAF6 activation possibly by inducing a conformational change in TIFA. In Rattus norvegicus (Rat), this protein is TRAF-interacting protein with FHA domain-containing protein B.